The sequence spans 146 residues: Universal stress protein MTH_1154 (146 aa).

This sequence belongs to the universal stress protein A family.

This chain is Universal stress protein MTH_1154, found in Methanothermobacter thermautotrophicus (strain ATCC 29096 / DSM 1053 / JCM 10044 / NBRC 100330 / Delta H) (Methanobacterium thermoautotrophicum).